The chain runs to 324 residues: N-acetylmuramoyl-L-alanine amidase sle1 (324 aa).

An N-terminal signal peptide occupies residues 1–25 (MQKKYITAIIGTTALSALASTHAQA). 3 consecutive LysM domains span residues 27–70 (TTHT…VLKV), 84–127 (TVYT…KLKV), and 147–190 (ATYT…KLKV). Residues 200-324 (SNNTRSNGGY…YQVRNYKFIH (125 aa)) enclose the Peptidase C51 domain.

The protein localises to the secreted. It localises to the cell surface. The catalysed reaction is Hydrolyzes the link between N-acetylmuramoyl residues and L-amino acid residues in certain cell-wall glycopeptides.. Functionally, peptidoglycan hydrolase involved in the splitting of the septum during cell division. This chain is N-acetylmuramoyl-L-alanine amidase sle1 (sle1), found in Staphylococcus epidermidis (strain ATCC 12228 / FDA PCI 1200).